Consider the following 443-residue polypeptide: Ribosomal protein uS12 methylthiotransferase RimO (443 aa).

The region spanning 9 to 119 (PKIGMVSLGC…VVSAVHDAAP (111 aa)) is the MTTase N-terminal domain. [4Fe-4S] cluster contacts are provided by Cys18, Cys54, Cys83, Cys150, Cys154, and Cys157. The Radical SAM core domain maps to 136-373 (LTPRHYSYLK…MEKAAQISEA (238 aa)). In terms of domain architecture, TRAM spans 376 to 443 (QAKIGRDIAT…EHDLFGVALS (68 aa)).

It belongs to the methylthiotransferase family. RimO subfamily. It depends on [4Fe-4S] cluster as a cofactor.

The protein localises to the cytoplasm. It carries out the reaction L-aspartate(89)-[ribosomal protein uS12]-hydrogen + (sulfur carrier)-SH + AH2 + 2 S-adenosyl-L-methionine = 3-methylsulfanyl-L-aspartate(89)-[ribosomal protein uS12]-hydrogen + (sulfur carrier)-H + 5'-deoxyadenosine + L-methionine + A + S-adenosyl-L-homocysteine + 2 H(+). In terms of biological role, catalyzes the methylthiolation of an aspartic acid residue of ribosomal protein uS12. This Zymomonas mobilis subsp. mobilis (strain ATCC 31821 / ZM4 / CP4) protein is Ribosomal protein uS12 methylthiotransferase RimO.